The primary structure comprises 1038 residues: MQPEEGTGWLLELLSEVQLQQYFLRLRDDLNVTRLSHFEYVKNEDLEKIGMGRPGQRRLWEAVKRRKALCKRKSWMSKVFSGKRLEAEFPPHHSQSTFRKTSPAPGGPAGEGPLQSLTCLIGEKDLRLLEKLGDGSFGVVRRGEWDAPSGKTVSVAVKCLKPDVLSQPEAMDDFIREVNAMHSLDHRNLIRLYGVVLTPPMKMVTELAPLGSLLDRLRKHQGHFLLGTLSRYAVQVAEGMGYLESKRFIHRDLAARNLLLATRDLVKIGDFGLMRALPQNDDHYVMQEHRKVPFAWCAPESLKTRTFSHASDTWMFGVTLWEMFTYGQEPWIGLNGSQILHKIDKEGERLPRPEDCPQDIYNVMVQCWAHKPEDRPTFVALRDFLLEAQPTDMRALQDFEEPDKLHIQMNDVITVIEGRAENYWWRGQNTRTLCVGPFPRNVVTSVAGLSAQDISQPLQNSFIHTGHGDSDPRHCWGFPDRIDELYLGNPMDPPDLLSVELSTSRPPQHLGGVKKPTYDPVSEDQDPLSSDFKRLGLRKPGLPRGLWLAKPSARVPGTKASRGSGAEVTLIDFGEEPVVPALRPCAPSLAQLAMDACSLLDETPPQSPTRALPRPLHPTPVVDWDARPLPPPPAYDDVAQDEDDFEICSINSTLVGAGVPAGPSQGQTNYAFVPEQARPPPPLEDNLFLPPQGGGKPPSSAQTAEIFQALQQECMRQLQAPAGSPAPSPSPGGDDKPQVPPRVPIPPRPTRPHVQLSPAPPGEEETSQWPGPASPPRVPPREPLSPQGSRTPSPLVPPGSSPLPPRLSSSPGKTMPTTQSFASDPKYATPQVIQAPGPRAGPCILPIVRDGKKVSSTHYYLLPERPSYLERYQRFLREAQSPEEPTPLPVPLLLPPPSTPAPAAPTATVRPMPQAALDPKANFSTNNSNPGARPPPPRATARLPQRGCPGDGPEAGRPADKIQMAMVHGVTTEECQAALQCHGWSVQRAAQYLKVEQLFGLGLRPRGECHKVLEMFDWNLEQAGCHLLGSWGPAHHKR.

The segment at Met-1 to Gly-110 is SAM-like domain. The interval Pro-90–Leu-114 is disordered. Residues Leu-126–Leu-385 form the Protein kinase domain. ATP-binding positions include Leu-132–Val-140 and Lys-158. The active-site Proton acceptor is Asp-252. Phosphotyrosine; by SRC and autocatalysis is present on Tyr-284. The SH3 domain maps to Ala-388–Gly-448. The region spanning Ile-454 to Gly-466 is the CRIB domain. Residues Leu-497–Leu-535 form a disordered region. Phosphotyrosine is present on Tyr-518. Residues Asp-623–Ser-652 form a required for interaction with SRC region. Residues Pro-632 to Tyr-635 form a required for interaction with NEDD4 region. Disordered regions lie at residues Val-659 to Gln-702 and Leu-718 to Ala-840. Ser-724 carries the post-translational modification Phosphoserine. An EBD domain region spans residues Gly-733–Leu-876. Composition is skewed to pro residues over residues Gln-738 to Pro-749, Pro-772 to Pro-783, and Pro-794 to Pro-805. Tyr-827 bears the Phosphotyrosine mark. Arg-839 carries the post-translational modification Omega-N-methylarginine. A phosphotyrosine mark is found at Tyr-859 and Tyr-872. Ser-881 carries the phosphoserine modification. A disordered region spans residues Leu-917–Arg-957. The region spanning Pro-958 to Glu-996 is the UBA domain.

It belongs to the protein kinase superfamily. Tyr protein kinase family. In terms of assembly, interacts with NEDD4 (via WW3 domain). NEDD4L and EGF promote association with NEDD4. Homodimer. Interacts with AR, CDC42, WWASL and WWOX. Interacts with CSPG4 (activated). Interacts with MERTK (activated); stimulates autophosphorylation. May interact (phosphorylated) with HSP90AB1; maintains kinase activity. Interacts with NPHP1. Interacts with SNX9 (via SH3 domain). Interacts with SRC (via SH2 and SH3 domain). Interacts with EGFR, and this interaction is dependent on EGF stimulation and kinase activity of EGFR. Interacts (via kinase domain) with AKT1. Part of a collagen stimulated complex involved in cell migration composed of CDC42, CRK, TNK2 and BCAR1/p130cas. Interacts with BCAR1/p130cas via SH3 domains. Forms complexes with GRB2 and numerous receptor tyrosine kinases (RTK) including LTK, AXL or PDGFRL, in which GRB2 promotes RTK recruitment by TNK2. Requires Mg(2+) as cofactor. In terms of processing, autophosphorylation regulates kinase activity. Phosphorylation on Tyr-518 is required for interaction with SRC and is observed during association with clathrin-coated pits. Polyubiquitinated by NEDD4 and NEDD4L. Degradation can be induced by EGF and is lysosome-dependent. As to expression, the Tyr-284 phosphorylated form shows a significant increase in expression in breast cancers during the progressive stages i.e. normal to hyperplasia (ADH), ductal carcinoma in situ (DCIS), invasive ductal carcinoma (IDC) and lymph node metastatic (LNMM) stages. It also shows a significant increase in expression in prostate cancers during the progressive stages.

It localises to the cell membrane. The protein localises to the nucleus. The protein resides in the endosome. It is found in the cell junction. Its subcellular location is the adherens junction. It localises to the cytoplasmic vesicle membrane. The protein localises to the cytoplasmic vesicle. The protein resides in the clathrin-coated vesicle. It is found in the membrane. Its subcellular location is the clathrin-coated pit. It localises to the cytoplasm. The protein localises to the perinuclear region. The protein resides in the cytosol. The catalysed reaction is L-tyrosyl-[protein] + ATP = O-phospho-L-tyrosyl-[protein] + ADP + H(+). It catalyses the reaction L-seryl-[protein] + ATP = O-phospho-L-seryl-[protein] + ADP + H(+). The enzyme catalyses L-threonyl-[protein] + ATP = O-phospho-L-threonyl-[protein] + ADP + H(+). Its activity is regulated as follows. Inhibited by AIM-100 (4-amino-5,6-biaryl-furo[2,3-d]pyrimidine), which suppresses activating phosphorylation at Tyr-284. Repressed by dasatinib. Its function is as follows. Non-receptor tyrosine-protein and serine/threonine-protein kinase that is implicated in cell spreading and migration, cell survival, cell growth and proliferation. Transduces extracellular signals to cytosolic and nuclear effectors. Phosphorylates AKT1, AR, MCF2, WASL and WWOX. Implicated in trafficking and clathrin-mediated endocytosis through binding to epidermal growth factor receptor (EGFR) and clathrin. Binds to both poly- and mono-ubiquitin and regulates ligand-induced degradation of EGFR, thereby contributing to the accumulation of EGFR at the limiting membrane of early endosomes. Downstream effector of CDC42 which mediates CDC42-dependent cell migration via phosphorylation of BCAR1. May be involved both in adult synaptic function and plasticity and in brain development. Activates AKT1 by phosphorylating it on 'Tyr-176'. Phosphorylates AR on 'Tyr-267' and 'Tyr-363' thereby promoting its recruitment to androgen-responsive enhancers (AREs). Phosphorylates WWOX on 'Tyr-287'. Phosphorylates MCF2, thereby enhancing its activity as a guanine nucleotide exchange factor (GEF) toward Rho family proteins. Contributes to the control of AXL receptor levels. Confers metastatic properties on cancer cells and promotes tumor growth by negatively regulating tumor suppressor such as WWOX and positively regulating pro-survival factors such as AKT1 and AR. Phosphorylates WASP. The sequence is that of Activated CDC42 kinase 1 (TNK2) from Homo sapiens (Human).